A 905-amino-acid chain; its full sequence is Clumping factor B (905 aa).

Residues 1-44 (MKKRIDYLSNKQNKYSIRRFTVGTTSVIVGATILFGIGNHQAQA) form the signal peptide. Residues 15–26 (YSIRRFTVGTTS) carry the YSIRK-G/S signaling motif motif. Composition is skewed to polar residues over residues 44 to 61 (ASEQ…NASA) and 68 to 101 (MIET…KPMS). The disordered stretch occupies residues 44 to 191 (ASEQSNDTTQ…AQGTSKPSVR (148 aa)). The ligand binding A region stretch occupies residues 45-542 (SEQSNDTTQS…GSADGDSAVN (498 aa)). Residues 102–119 (TQTSNTTTTEPASTNETP) show a composition bias toward low complexity. Positions 134 to 189 (QDQTVPQEANSQVDNKTTNDANSIATNSELKNPQTLDLPQSSPQTISNAQGTSKPS) are enriched in polar residues. The MIDAS-like motif signature appears at 272-276 (DYSNS). Positions 530–877 (YGGGSADGDS…ETGDKSENTN (348 aa)) are disordered. Over residues 545 to 555 (DPTPGPPVDPE) the composition is skewed to pro residues. Positions 556 to 829 (PSPDPEPEPS…SDSDSDSDSD (274 aa)) are enriched in acidic residues. Residues 833-844 (RVTPPNNEQKAP) show a composition bias toward polar residues. Basic and acidic residues predominate over residues 861-874 (HKTDALPETGDKSE). The short motif at 866 to 870 (LPETG) is the LPXTG sorting signal element. Thr-869 bears the Pentaglycyl murein peptidoglycan amidated threonine mark. Positions 870 to 905 (GDKSENTNATLFGAMMALLGSLLLFRKRKQDHKEKA) are cleaved as a propeptide — removed by sortase.

This sequence belongs to the serine-aspartate repeat-containing protein (SDr) family. In terms of processing, proteolytically cleaved by aureolysin (aur). This cleavage leads to the inactivation of ClfB.

The protein localises to the secreted. It is found in the cell wall. Functionally, cell surface-associated protein implicated in virulence by promoting bacterial attachment to both alpha- and beta-chains of human fibrinogen and inducing the formation of bacterial clumps. This is Clumping factor B (clfB) from Staphylococcus aureus (strain MSSA476).